The sequence spans 409 residues: Growth-regulating factor 8 (409 aa).

Composition is skewed to gly residues over residues 1-10 (MLSSCGGHGH) and 27-36 (QQGGGGGGGQ). The disordered stretch occupies residues 1–81 (MLSSCGGHGH…GGGGQMLSFS (81 aa)). A compositionally biased stretch (low complexity) spans 56-68 (SSSSFLGSTSSSC). Residues 107 to 142 (PFTPTQWMELEHQALIYKHIAANVSVPSSLLLPIRR) enclose the QLQ domain. Residues 158–202 (DVEPRRCRRTDGKKWRCSRDAVGDQKYCERHINRGRHRSRKHVEG) enclose the WRC domain. 2 consecutive short sequence motifs (bipartite nuclear localization signal) follow at residues 163–173 (RCRRTDGKKWR) and 191–198 (RGRHRSRK). The interval 221–242 (SSRGHTVARQKQVKGSAATVSD) is disordered.

Belongs to the GRF family.

Its subcellular location is the nucleus. Transcription activator that plays a regulatory role in gibberellin-induced stem elongation. The polypeptide is Growth-regulating factor 8 (GRF8) (Oryza sativa subsp. japonica (Rice)).